Consider the following 233-residue polypeptide: Uracil-DNA glycosylase (233 aa).

Aspartate 70 (proton acceptor) is an active-site residue.

It belongs to the uracil-DNA glycosylase (UDG) superfamily. UNG family.

It is found in the cytoplasm. It catalyses the reaction Hydrolyzes single-stranded DNA or mismatched double-stranded DNA and polynucleotides, releasing free uracil.. In terms of biological role, excises uracil residues from the DNA which can arise as a result of misincorporation of dUMP residues by DNA polymerase or due to deamination of cytosine. The protein is Uracil-DNA glycosylase of Helicobacter pylori (strain Shi470).